The sequence spans 380 residues: Cyclohexane-1-carbonyl-CoA dehydrogenase (380 aa).

This sequence belongs to the acyl-CoA dehydrogenase family. In terms of assembly, homotetramer. FAD is required as a cofactor.

The enzyme catalyses cyclohexane-1-carbonyl-CoA + oxidized [electron-transfer flavoprotein] + H(+) = cyclohex-1-ene-1-carbonyl-CoA + reduced [electron-transfer flavoprotein]. Acyl-CoA dehydrogenase involved in the anaerobic degradation of cyclohexane carboxylic acid (CHC). Catalyzes the 1,2-dehydrogenation of cyclohexane-1-carbonyl-CoA (CHCoA) to cyclohex-1-ene-1-carbonyl-CoA (CHeneCoA). An alternative substrate, cyclohex-3-ene-1-carboxyl-CoA can be converted to the corresponding cyclohexadiene-1-carboxyl-CoA isomers (30% rate compared to CHC). The polypeptide is Cyclohexane-1-carbonyl-CoA dehydrogenase (Geobacter metallireducens (strain ATCC 53774 / DSM 7210 / GS-15)).